The chain runs to 572 residues: O-fucosyltransferase 16 (572 aa).

Residues 17–37 (LLPLVIAVSLSLLILFAFLSF) traverse the membrane as a helical; Signal-anchor for type II membrane protein segment. 2 N-linked (GlcNAc...) asparagine glycosylation sites follow: asparagine 92 and asparagine 136. 274–276 (HLR) lines the substrate pocket. 2 N-linked (GlcNAc...) asparagine glycosylation sites follow: asparagine 446 and asparagine 506. The interval 498 to 572 (ESRKLGKKNK…EPELEAMLSD (75 aa)) is disordered. The segment covering 521–541 (DQTEEDDPDWSEPDYEEEQSD) has biased composition (acidic residues). A glycan (N-linked (GlcNAc...) asparagine) is linked at asparagine 549. Residues 554–566 (DYDDPSTSDEPEL) show a composition bias toward acidic residues.

It belongs to the glycosyltransferase GT106 family.

It is found in the membrane. Its pathway is glycan metabolism. This Arabidopsis thaliana (Mouse-ear cress) protein is O-fucosyltransferase 16.